A 395-amino-acid chain; its full sequence is Alanine racemase 2 (395 aa).

Lys60 (proton acceptor; specific for D-alanine) is an active-site residue. Lys60 bears the N6-(pyridoxal phosphate)lysine mark. Arg158 serves as a coordination point for substrate. Catalysis depends on Tyr288, which acts as the Proton acceptor; specific for L-alanine. Substrate is bound at residue Met332.

This sequence belongs to the alanine racemase family. Pyridoxal 5'-phosphate is required as a cofactor.

The catalysed reaction is L-alanine = D-alanine. It functions in the pathway amino-acid biosynthesis; D-alanine biosynthesis; D-alanine from L-alanine: step 1/1. Its function is as follows. Catalyzes the interconversion of L-alanine and D-alanine. May also act on other amino acids. This Clostridium acetobutylicum (strain ATCC 824 / DSM 792 / JCM 1419 / IAM 19013 / LMG 5710 / NBRC 13948 / NRRL B-527 / VKM B-1787 / 2291 / W) protein is Alanine racemase 2 (alr2).